Reading from the N-terminus, the 345-residue chain is Phosphate acyltransferase (345 aa).

The protein belongs to the PlsX family. In terms of assembly, homodimer. Probably interacts with PlsY.

Its subcellular location is the cytoplasm. The enzyme catalyses a fatty acyl-[ACP] + phosphate = an acyl phosphate + holo-[ACP]. Its pathway is lipid metabolism; phospholipid metabolism. Functionally, catalyzes the reversible formation of acyl-phosphate (acyl-PO(4)) from acyl-[acyl-carrier-protein] (acyl-ACP). This enzyme utilizes acyl-ACP as fatty acyl donor, but not acyl-CoA. This chain is Phosphate acyltransferase, found in Wolbachia sp. subsp. Brugia malayi (strain TRS).